A 286-amino-acid polypeptide reads, in one-letter code: Beta-lactamase SHV-2 (286 aa).

A signal peptide spans 1-21; that stretch reads MRYIRLCIISLLATLPLAVHA. The active-site Acyl-ester intermediate is the Ser66. The cysteines at positions 73 and 119 are disulfide-linked. Glu164 acts as the Proton acceptor in catalysis. 230–232 provides a ligand contact to substrate; that stretch reads KTG.

The protein belongs to the class-A beta-lactamase family.

The catalysed reaction is a beta-lactam + H2O = a substituted beta-amino acid. Its function is as follows. This enzyme hydrolyzes cefotaxime, ceftazidime and other broad spectrum cephalosporins. In Klebsiella pneumoniae, this protein is Beta-lactamase SHV-2 (bla).